Reading from the N-terminus, the 434-residue chain is D-amino acid dehydrogenase (434 aa).

V3 to W17 is a binding site for FAD.

It belongs to the DadA oxidoreductase family. FAD serves as cofactor.

It catalyses the reaction a D-alpha-amino acid + A + H2O = a 2-oxocarboxylate + AH2 + NH4(+). The protein operates within amino-acid degradation; D-alanine degradation; NH(3) and pyruvate from D-alanine: step 1/1. Functionally, oxidative deamination of D-amino acids. The sequence is that of D-amino acid dehydrogenase from Yersinia enterocolitica serotype O:8 / biotype 1B (strain NCTC 13174 / 8081).